A 221-amino-acid polypeptide reads, in one-letter code: Protein-L-isoaspartate O-methyltransferase (221 aa).

The active site involves Ser70.

It belongs to the methyltransferase superfamily. L-isoaspartyl/D-aspartyl protein methyltransferase family.

It is found in the cytoplasm. The enzyme catalyses [protein]-L-isoaspartate + S-adenosyl-L-methionine = [protein]-L-isoaspartate alpha-methyl ester + S-adenosyl-L-homocysteine. Functionally, catalyzes the methyl esterification of L-isoaspartyl residues in peptides and proteins that result from spontaneous decomposition of normal L-aspartyl and L-asparaginyl residues. It plays a role in the repair and/or degradation of damaged proteins. This Alkalilimnicola ehrlichii (strain ATCC BAA-1101 / DSM 17681 / MLHE-1) protein is Protein-L-isoaspartate O-methyltransferase.